We begin with the raw amino-acid sequence, 125 residues long: Type-4 ice-structuring protein (125 aa).

A signal peptide spans 1 to 20 (MKYTLIAAIVVLALAQGTLA).

This sequence belongs to the apolipoprotein A1/A4/E family.

The protein resides in the secreted. Functionally, antifreeze proteins lower the blood freezing point. In Gadus morhua (Atlantic cod), this protein is Type-4 ice-structuring protein.